Consider the following 300-residue polypeptide: Tyrosine recombinase XerC (300 aa).

The region spanning 4 to 90 (VALSLDVSRF…ALRSFFDWLV (87 aa)) is the Core-binding (CB) domain. In terms of domain architecture, Tyr recombinase spans 111-290 (HLPKNIDVDD…DFQHLASVYD (180 aa)). Catalysis depends on residues Arg150, Lys174, His242, Arg245, and His268. Tyr277 acts as the O-(3'-phospho-DNA)-tyrosine intermediate in catalysis.

Belongs to the 'phage' integrase family. XerC subfamily. Forms a cyclic heterotetrameric complex composed of two molecules of XerC and two molecules of XerD, in which XerC interacts with XerD via its C-terminal region, XerD interacts with XerC via its C-terminal region and so on.

It localises to the cytoplasm. With respect to regulation, ftsK may regulate the catalytic switch between XerC and XerD in the heterotetrameric complex during the two steps of the recombination process. Site-specific tyrosine recombinase, which acts by catalyzing the cutting and rejoining of the recombining DNA molecules. Binds cooperatively to specific DNA consensus sequences that are separated from XerD binding sites by a short central region, forming the heterotetrameric XerC-XerD complex that recombines DNA substrates. The complex is essential to convert dimers of the bacterial chromosome into monomers to permit their segregation at cell division. It also contributes to the segregational stability of plasmids. In the complex XerC specifically exchanges the top DNA strands. The chain is Tyrosine recombinase XerC from Salmonella typhi.